The following is a 2547-amino-acid chain: Lovastatin diketide synthase mokB (2547 aa).

One can recognise a Ketosynthase family 3 (KS3) domain in the interval 10–430 (PTPIAVVGMG…GANAHAIVER (421 aa)). Catalysis depends on for beta-ketoacyl synthase activity residues C183, H318, and H353. The interval 545–890 (VFTGQGAQWF…MDLLQGGYPV (346 aa)) is acyl and malonyl transferase. Residue S635 is the For malonyltransferase activity of the active site. Residues 941–1079 (HDLIGVQEPL…GLIRAQVDHP (139 aa)) form an N-terminal hotdog fold region. A PKS/mFAS DH domain is found at 941-1252 (HDLIGVQEPL…FQSLGAVISD (312 aa)). The active-site Proton acceptor; for dehydratase activity is the H973. The dehydratase-like stretch occupies residues 973–985 (HVVGSRILFPGAG). The interval 1095–1252 (SRKMAPQDLW…FQSLGAVISD (158 aa)) is C-terminal hotdog fold. D1160 acts as the Proton donor; for dehydratase activity in catalysis. An intrachain disulfide couples C1340 to C1379. The tract at residues 1510–1547 (YDVVLACQVLHATSNMQRTLNNVRKLLKPGGKLILVET) is methyltransferase. In terms of domain architecture, Carrier spans 2459-2541 (ASTEEEATAL…EVAEVVVKKY (83 aa)). S2501 bears the O-(pantetheine 4'-phosphoryl)serine mark.

It depends on pantetheine 4'-phosphate as a cofactor.

It carries out the reaction holo-[2-methylbutanoate polyketide synthase] + 2 malonyl-CoA + S-adenosyl-L-methionine + 2 NADPH + 3 H(+) = (S)-2-methylbutanoyl-[2-methylbutanoate polyketide synthase] + S-adenosyl-L-homocysteine + 2 CO2 + 2 NADP(+) + 2 CoA + H2O. It participates in polyketide biosynthesis; lovastatin biosynthesis. Diketide synthase; part of the gene cluster that mediates the biosynthesis of monakolin K, also known as lovastatin, and which acts as a potent competitive inhibitor of HMG-CoA reductase. Monakolin K biosynthesis is performed in two stages. The first stage is catalyzed by the nonaketide synthase mokA, which belongs to type I polyketide synthases and catalyzes the iterative nine-step formation of the polyketide. This PKS stage completed by the action of dehydrogenase mokE, which catalyzes the NADPH-dependent reduction of the unsaturated tetra-, penta- and heptaketide intermediates that arise during the mokA-mediated biosynthesis of the nonaketide chain and leads to dihydromonacolin L. Covalently bound dihydromonacolin L is released from mokA by the mokD esterase. Conversion of dihydromonacolin L into monacolin L and then monacolin J is subsequently performed with the participation of molecular oxygen and P450 monoogygenase mokC. Finally, mokF performs the conversion of monacoline J to monacoline K through the addition of the side-chain diketide moiety (2R)-2-methylbutanoate produced by the diketide synthase mokB. This chain is Lovastatin diketide synthase mokB, found in Monascus pilosus (Red mold).